We begin with the raw amino-acid sequence, 507 residues long: Chromosomal replication initiator protein DnaA (507 aa).

The domain I, interacts with DnaA modulators stretch occupies residues 1–87 (MSVELWQQCV…IGSKRSSAPR (87 aa)). Residues 85–110 (APRAAPNAPLAAAQVSQAQANAAPAS) show a composition bias toward low complexity. Residues 85–158 (APRAAPNAPL…QQAPVRAEQR (74 aa)) form a disordered region. Positions 87–170 (RAAPNAPLAA…QVEGALKHTS (84 aa)) are domain II. Over residues 126-140 (QKTEEISEEPSRDSF) the composition is skewed to basic and acidic residues. Positions 171–387 (YLNRTFTFEN…GALKRVIAHS (217 aa)) are domain III, AAA+ region. Residues glycine 215, glycine 217, lysine 218, and threonine 219 each contribute to the ATP site. Positions 388-507 (HFMGRDITIE…YKNLLRTLTT (120 aa)) are domain IV, binds dsDNA.

It belongs to the DnaA family. Oligomerizes as a right-handed, spiral filament on DNA at oriC.

The protein resides in the cytoplasm. Plays an essential role in the initiation and regulation of chromosomal replication. ATP-DnaA binds to the origin of replication (oriC) to initiate formation of the DNA replication initiation complex once per cell cycle. Binds the DnaA box (a 9 base pair repeat at the origin) and separates the double-stranded (ds)DNA. Forms a right-handed helical filament on oriC DNA; dsDNA binds to the exterior of the filament while single-stranded (ss)DNA is stabiized in the filament's interior. The ATP-DnaA-oriC complex binds and stabilizes one strand of the AT-rich DNA unwinding element (DUE), permitting loading of DNA polymerase. After initiation quickly degrades to an ADP-DnaA complex that is not apt for DNA replication. Binds acidic phospholipids. This Pseudomonas fluorescens (strain Pf0-1) protein is Chromosomal replication initiator protein DnaA.